A 315-amino-acid polypeptide reads, in one-letter code: Glutaminase (315 aa).

Residues S70, N120, E166, N173, Y197, Y249, and V267 each coordinate substrate.

The protein belongs to the glutaminase family. In terms of assembly, homotetramer.

The catalysed reaction is L-glutamine + H2O = L-glutamate + NH4(+). The chain is Glutaminase from Mesorhizobium japonicum (strain LMG 29417 / CECT 9101 / MAFF 303099) (Mesorhizobium loti (strain MAFF 303099)).